Reading from the N-terminus, the 699-residue chain is Endogenous retrovirus group K member 113 Env polyprotein (699 aa).

The interval M1–P47 is disordered. The signal sequence occupies residues M1–S89. A compositionally biased stretch (basic residues) spans A10 to R20. Topologically, residues L90 to T632 are extracellular. 7 N-linked (GlcNAc...) asparagine glycosylation sites follow: N100, N128, N153, N274, N355, N372, and N461. A fusion peptide region spans residues F466 to V486. N-linked (GlcNAc...) asparagine glycosylation is found at N507, N554, N566, and N585. A helical transmembrane segment spans residues I633–L653. At V654 to V699 the chain is on the cytoplasmic side.

The protein belongs to the beta type-B retroviral envelope protein family. HERV class-II K(HML-2) env subfamily. The surface (SU) and transmembrane (TM) proteins form a heterodimer. SU and TM are attached by noncovalent interactions or by a labile interchain disulfide bond. Post-translationally, specific enzymatic cleavages in vivo yield the mature SU and TM proteins.

Its subcellular location is the cell membrane. It is found in the virion. In terms of biological role, retroviral envelope proteins mediate receptor recognition and membrane fusion during early infection. Endogenous envelope proteins may have kept, lost or modified their original function during evolution. This endogenous envelope protein has lost its original fusogenic properties. Its function is as follows. SU mediates receptor recognition. TM anchors the envelope heterodimer to the viral membrane through one transmembrane domain. The other hydrophobic domain, called fusion peptide, mediates fusion of the viral membrane with the target cell membrane. In Homo sapiens (Human), this protein is Endogenous retrovirus group K member 113 Env polyprotein (HERVK_113).